The sequence spans 183 residues: Glutathione-regulated potassium-efflux system ancillary protein KefG (183 aa).

The protein belongs to the NAD(P)H dehydrogenase (quinone) family. KefG subfamily. Interacts with KefB.

It localises to the cell inner membrane. It carries out the reaction a quinone + NADH + H(+) = a quinol + NAD(+). It catalyses the reaction a quinone + NADPH + H(+) = a quinol + NADP(+). In terms of biological role, regulatory subunit of a potassium efflux system that confers protection against electrophiles. Required for full activity of KefB. The polypeptide is Glutathione-regulated potassium-efflux system ancillary protein KefG (Enterobacter sp. (strain 638)).